A 586-amino-acid chain; its full sequence is Phosphomethylpyrimidine synthase (586 aa).

Positions 1 to 58 are disordered; it reads MKQSVSAEQIELKSSLPGSKKVYVDGPREGMKVPMREIEQSDTNGVPNPPIRVYDTSG. A compositionally biased stretch (basic and acidic residues) spans 22-39; it reads VYVDGPREGMKVPMREIE. Substrate contacts are provided by residues Asn193, Met222, Tyr251, His287, 307–309, 348–351, and Glu387; these read SRG and DGLR. His391 contacts Zn(2+). Tyr414 contacts substrate. A Zn(2+)-binding site is contributed by His455. Residues Cys535, Cys538, and Cys543 each contribute to the [4Fe-4S] cluster site.

This sequence belongs to the ThiC family. [4Fe-4S] cluster serves as cofactor.

The catalysed reaction is 5-amino-1-(5-phospho-beta-D-ribosyl)imidazole + S-adenosyl-L-methionine = 4-amino-2-methyl-5-(phosphooxymethyl)pyrimidine + CO + 5'-deoxyadenosine + formate + L-methionine + 3 H(+). The protein operates within cofactor biosynthesis; thiamine diphosphate biosynthesis. Catalyzes the synthesis of the hydroxymethylpyrimidine phosphate (HMP-P) moiety of thiamine from aminoimidazole ribotide (AIR) in a radical S-adenosyl-L-methionine (SAM)-dependent reaction. The sequence is that of Phosphomethylpyrimidine synthase from Bacillus thuringiensis (strain Al Hakam).